Consider the following 671-residue polypeptide: TBC1 domain family member 15 (671 aa).

A2 carries the N-acetylalanine modification. S23, S32, S70, S205, and S257 each carry phosphoserine. The Rab-GAP TBC domain maps to 329-539 (GLSHSLRKQA…RLWEVMWTEL (211 aa)). Residues S623 and S655 each carry the phosphoserine modification. Residues 650 to 671 (EAKDDSPTQTLASPNACRLTPA) are disordered. Position 669 is a phosphothreonine (T669).

In terms of assembly, interacts with non-phosphorylated form of RAB8A; phosphorylation of RAB8A at 'Thr-72' disrupts this interaction. Interacts with ARMC12. In terms of tissue distribution, ubiquitous, with highest expression in heart, liver and testis and lower expression in brain, spleen, lung, kidney and skeletal muscle.

The protein localises to the cytoplasm. In terms of biological role, acts as a GTPase activating protein for RAB7A. Does not act on RAB4, RAB5 or RAB6. The polypeptide is TBC1 domain family member 15 (Tbc1d15) (Mus musculus (Mouse)).